A 143-amino-acid polypeptide reads, in one-letter code: Large ribosomal subunit protein uL11 (143 aa).

This sequence belongs to the universal ribosomal protein uL11 family. In terms of assembly, part of the ribosomal stalk of the 50S ribosomal subunit. Interacts with L10 and the large rRNA to form the base of the stalk. L10 forms an elongated spine to which L12 dimers bind in a sequential fashion forming a multimeric L10(L12)X complex. One or more lysine residues are methylated.

Its function is as follows. Forms part of the ribosomal stalk which helps the ribosome interact with GTP-bound translation factors. This Sphingopyxis alaskensis (strain DSM 13593 / LMG 18877 / RB2256) (Sphingomonas alaskensis) protein is Large ribosomal subunit protein uL11.